Reading from the N-terminus, the 269-residue chain is Hydroxyethylthiazole kinase (269 aa).

Methionine 46 lines the substrate pocket. The ATP site is built by arginine 122 and threonine 168. Residue glycine 195 participates in substrate binding.

This sequence belongs to the Thz kinase family. Requires Mg(2+) as cofactor.

It carries out the reaction 5-(2-hydroxyethyl)-4-methylthiazole + ATP = 4-methyl-5-(2-phosphooxyethyl)-thiazole + ADP + H(+). The protein operates within cofactor biosynthesis; thiamine diphosphate biosynthesis; 4-methyl-5-(2-phosphoethyl)-thiazole from 5-(2-hydroxyethyl)-4-methylthiazole: step 1/1. Catalyzes the phosphorylation of the hydroxyl group of 4-methyl-5-beta-hydroxyethylthiazole (THZ). The sequence is that of Hydroxyethylthiazole kinase from Chloroflexus aurantiacus (strain ATCC 29366 / DSM 635 / J-10-fl).